The chain runs to 992 residues: Aminopeptidase Q (992 aa).

Residues 2–13 are Cytoplasmic-facing; sequence GPPSSSGFYVSR. A helical; Signal-anchor for type II membrane protein membrane pass occupies residues 14-34; the sequence is AVALLLAALAAALLLALAVLA. Topologically, residues 35–992 are extracellular; that stretch reads ALYGRCARVQ…RMTAWLRKNT (958 aa). Residues 48 to 92 form a disordered region; that stretch reads LHHGGVPDAASSPRGTQEEQLPTWPPRPTREPAGTATPGHWRPPG. N133 carries N-linked (GlcNAc...) asparagine glycosylation. E241 is a binding site for substrate. N-linked (GlcNAc...) asparagine glycans are attached at residues N262, N289, N347, and N361. Position 380–384 (380–384) interacts with substrate; it reads SAMEN. A Zn(2+)-binding site is contributed by H416. E417 (proton acceptor) is an active-site residue. Residues H420 and E439 each contribute to the Zn(2+) site. Residue N489 is glycosylated (N-linked (GlcNAc...) asparagine). Y505 (proton donor) is an active-site residue. N-linked (GlcNAc...) asparagine glycosylation is found at N584, N602, N609, N655, N811, N850, and N889.

It belongs to the peptidase M1 family. Zn(2+) is required as a cofactor. As to expression, expressed in skin. Expression levels do not differ between dark and light skin areas.

It is found in the membrane. Its function is as follows. Metalloprotease which may be important for placentation by regulating biological activity of key peptides at the embryo-maternal interface. Involved in coat pigmentation patterns. During skin development, may be required to establish the periodicity of tabby markings, initiating a pre-pattern at or before hair follicle development. This is Aminopeptidase Q (LVRN) from Acinonyx jubatus (Cheetah).